The primary structure comprises 579 residues: MENLKQLQERVAVSDGRAKADLVIKNGRIVNVFSGEIMEGDIAIKNGYIAGIGHFPDADQIIDAAGEFISPGFIDAHVHVESAMVTPSEFARVLLPNGVTTIITDPHEIANVAGEKGIEFMLEDAKGAPLDMFVMLPSSVPATEGEHNGETLHAKQLHPLYKHEKVIGLAEVMDFPSVAKGSADILTKIIDAKQEGGRIDGHGAGLTSADLNNYLAVGIRTDHESTSAKEALDRLRAGMFVMLREGTVGRDLKQTISAVTEKNSHRFCFCTDDKLINDLLTEGSINYNIRLAIENGVEPITAIQMATINAANCHNLPYLGAVAAGYQADIVFLKDLKTIEISKVLKNGQVVVENGTRKEAAFKKENKAKFISPKINHHLSIKDLELPLTNETCYVIGMQQNNLFTEKLMEQVTIKNGKFVPSIEKDLLKMAVVERHHNTGCVGVGIVKGFGLTEGAIATTVAHDSHNIVAVGVSDEAMEKAIDHVTKTGGGIAVVDAAGNVLHDLALQVAGLLSDKPYEEVENDLAGLLKAFNQISKAKGFDPFLTLSFLTLPVIPELKLTDQGLFDFATFQIIPNEVN.

The protein belongs to the metallo-dependent hydrolases superfamily. Adenine deaminase family. Mn(2+) serves as cofactor.

It carries out the reaction adenine + H2O + H(+) = hypoxanthine + NH4(+). The protein is Adenine deaminase of Listeria innocua serovar 6a (strain ATCC BAA-680 / CLIP 11262).